A 473-amino-acid polypeptide reads, in one-letter code: Ribulose bisphosphate carboxylase large chain (473 aa).

Positions 1 to 136 (MAVKKYSAGV…RLEDVRFPLA (136 aa)) are necessary and sufficient to target proteins to carboxysomes, interacts with shell proteins. Substrate-binding residues include Asn116 and Thr166. The Proton acceptor role is filled by Lys168. Lys170 provides a ligand contact to substrate. The Mg(2+) site is built by Lys194, Asp196, and Glu197. Position 194 is an N6-carboxylysine (Lys194). The active-site Proton acceptor is the His287. Substrate is bound by residues Arg288, His320, and Ser372.

Belongs to the RuBisCO large chain family. Type I subfamily. In terms of assembly, heterohexadecamer of 8 large chains and 8 small chains. Forms a CsoS2-CsoS1-RuBisCO complex. The N-terminus (residues 1-136) interacts with shell proteins CsoS1A, CsoS1B and CsoS1C. Holo-RuBisCO interacts with the N-terminal repeats of CsoS2; binding is sensitive to ionic strength. A fusion of a single N-terminal repeat to the C-terminus of the large subunit of RuBisCO (cbbL) shows the repeat can lie between a CbbL dimer, making minor contacts to CbbS; thus each RuBisCO holoenzyme could bind 8 repeats. Mg(2+) serves as cofactor.

Its subcellular location is the carboxysome. The catalysed reaction is 2 (2R)-3-phosphoglycerate + 2 H(+) = D-ribulose 1,5-bisphosphate + CO2 + H2O. It carries out the reaction D-ribulose 1,5-bisphosphate + O2 = 2-phosphoglycolate + (2R)-3-phosphoglycerate + 2 H(+). RuBisCO catalyzes two reactions: the carboxylation of D-ribulose 1,5-bisphosphate, the primary event in carbon dioxide fixation, as well as the oxidative fragmentation of the pentose substrate. Both reactions occur simultaneously and in competition at the same active site. There are estimated to be 270 RuBisCO heterohexadecamers per carboxysome. Its function is as follows. Alpha-carboxysomes are able to assemble in the absence of RuBisCO, unlike beta-carboxysomes. The RuBisCO large subunit is required for enzyme integration into carboxysomes; replacing it with the carboxysomally targeted gene (Tcr_0838, AC Q31HD9) of H.crungenus places RuBisCO in the carboxysome, while the non-carboxysomal large subunit of H.crungenus (Tcr_0427, AC Q31IK0) is not incorporated in the carboxysome. The chain is Ribulose bisphosphate carboxylase large chain from Halothiobacillus neapolitanus (strain ATCC 23641 / c2) (Thiobacillus neapolitanus).